Reading from the N-terminus, the 137-residue chain is Phospholipase A2 homolog PLA2-03 (137 aa).

An N-terminal signal peptide occupies residues 1–16 (MRTLWIVAVLLVGVEG). Intrachain disulfides connect Cys-42–Cys-131, Cys-44–Cys-60, Cys-59–Cys-111, Cys-65–Cys-137, Cys-66–Cys-104, Cys-73–Cys-97, and Cys-91–Cys-102. Residues 121–133 (KKYKIFPKFLCKK) form an important for membrane-damaging activities in eukaryotes and bacteria; heparin-binding region.

It belongs to the phospholipase A2 family. Group II subfamily. K49 sub-subfamily. Expressed by the venom gland.

Its subcellular location is the secreted. Its function is as follows. Snake venom phospholipase A2 homolog that lacks enzymatic activity. Is myotoxic and displays edema-inducing activities in mouse paw. A model of myotoxic mechanism has been proposed: an apo Lys49-PLA2 is activated by the entrance of a hydrophobic molecule (e.g. fatty acid) at the hydrophobic channel of the protein leading to a reorientation of a monomer. This reorientation causes a transition between 'inactive' to 'active' states, causing alignment of C-terminal and membrane-docking sites (MDoS) side-by-side and putting the membrane-disruption sites (MDiS) in the same plane, exposed to solvent and in a symmetric position for both monomers. The MDoS region stabilizes the toxin on membrane by the interaction of charged residues with phospholipid head groups. Subsequently, the MDiS region destabilizes the membrane with penetration of hydrophobic residues. This insertion causes a disorganization of the membrane, allowing an uncontrolled influx of ions (i.e. calcium and sodium), and eventually triggering irreversible intracellular alterations and cell death. The sequence is that of Phospholipase A2 homolog PLA2-03 from Ovophis okinavensis (Ryukyu Island pit viper).